The following is a 98-amino-acid chain: Protein FAM24A (98 aa).

The N-terminal stretch at 1 to 29 (MFDLRTKVMIGIASTLLIAAIVLITVVFC) is a signal peptide.

The protein belongs to the FAM24 family.

Its subcellular location is the secreted. In Rattus norvegicus (Rat), this protein is Protein FAM24A (Fam24a).